Consider the following 121-residue polypeptide: MSAISPKIQNQIAMLQQVQQQMQTIMSQKTQYEMEIRENRRAEEELNDVPQESAVFMNVGTVMMQKPKEKVIASLQEKAESLELRVKSLEKQEKMMQAKFEQLQAQVKEALEGGNRPPNAA.

The protein belongs to the prefoldin subunit beta family. As to quaternary structure, heterohexamer of two alpha and four beta subunits.

It is found in the cytoplasm. Its function is as follows. Molecular chaperone capable of stabilizing a range of proteins. Seems to fulfill an ATP-independent, HSP70-like function in archaeal de novo protein folding. The protein is Prefoldin subunit beta of Methanosphaerula palustris (strain ATCC BAA-1556 / DSM 19958 / E1-9c).